The following is a 361-amino-acid chain: 5-formaminoimidazole-4-carboxamide-1-(beta)-D-ribofuranosyl 5'-monophosphate synthetase (361 aa).

Residues histidine 27 and serine 94 each coordinate 5-amino-1-(5-phospho-beta-D-ribosyl)imidazole-4-carboxamide. In terms of domain architecture, ATP-grasp spans 116 to 348 (RQILRWEAER…MGQRIAKEIK (233 aa)). Residues 146–208 (PDEI…TNYC) and glutamate 230 contribute to the ATP site. 5-amino-1-(5-phospho-beta-D-ribosyl)imidazole-4-carboxamide is bound at residue asparagine 258. Positions 297 and 310 each coordinate Mg(2+).

This sequence belongs to the phosphohexose mutase family. Mg(2+) is required as a cofactor. The cofactor is Mn(2+).

It carries out the reaction 5-amino-1-(5-phospho-beta-D-ribosyl)imidazole-4-carboxamide + formate + ATP = 5-formamido-1-(5-phospho-D-ribosyl)imidazole-4-carboxamide + ADP + phosphate. The protein operates within purine metabolism; IMP biosynthesis via de novo pathway; 5-formamido-1-(5-phospho-D-ribosyl)imidazole-4-carboxamide from 5-amino-1-(5-phospho-D-ribosyl)imidazole-4-carboxamide (formate route): step 1/1. Its function is as follows. Catalyzes the ATP- and formate-dependent formylation of 5-aminoimidazole-4-carboxamide-1-beta-d-ribofuranosyl 5'-monophosphate (AICAR) to 5-formaminoimidazole-4-carboxamide-1-beta-d-ribofuranosyl 5'-monophosphate (FAICAR) in the absence of folates. The protein is 5-formaminoimidazole-4-carboxamide-1-(beta)-D-ribofuranosyl 5'-monophosphate synthetase of Methanococcus aeolicus (strain ATCC BAA-1280 / DSM 17508 / OCM 812 / Nankai-3).